We begin with the raw amino-acid sequence, 224 residues long: Prothoracicotropic hormone (224 aa).

An N-terminal signal peptide occupies residues 1–29 (MITRPIILVILCYAILMIVQSFVPKAVAL). 3 disulfides stabilise this stretch: Cys132/Cys169, Cys155/Cys211, and Cys163/Cys213. An N-linked (GlcNAc...) asparagine glycan is attached at Asn156.

As to quaternary structure, homodimer; disulfide-linked. PTTH is synthesized by two dorsolateral neurosecretory cells of the Bombyx brain.

Its function is as follows. PTTH is a brain secretory polypeptide of insects which stimulates the prothoracic glands to produce and release ecdysone, the steroid essential to insect development. Functionally, peptides P2K and P6K are presumed to be cleaved post-translationally and may play some unknown physiologically or developmentally important functions. This chain is Prothoracicotropic hormone, found in Bombyx mori (Silk moth).